The sequence spans 423 residues: Levansucrase (423 aa).

Sucrose contacts are provided by tryptophan 47, aspartate 48, serine 119, arginine 193, and aspartate 194. The Nucleophile role is filled by aspartate 48. The active-site Proton donor/acceptor is the glutamate 278.

This sequence belongs to the glycosyl hydrolase 68 family.

It is found in the secreted. It catalyses the reaction [6)-beta-D-fructofuranosyl-(2-&gt;](n) alpha-D-glucopyranoside + sucrose = [6)-beta-D-fructofuranosyl-(2-&gt;](n+1) alpha-D-glucopyranoside + D-glucose. Its function is as follows. Catalyzes the synthesis of levan, a fructose polymer, by transferring the fructosyl moiety from sucrose to a growing acceptor molecule. The protein is Levansucrase of Zymomonas mobilis subsp. mobilis (strain ATCC 10988 / DSM 424 / LMG 404 / NCIMB 8938 / NRRL B-806 / ZM1).